Here is a 426-residue protein sequence, read N- to C-terminus: Serine--tRNA ligase (426 aa).

Residue 233 to 235 participates in L-serine binding; that stretch reads TAE. An ATP-binding site is contributed by 264-266; it reads RSE. Glu287 provides a ligand contact to L-serine. An ATP-binding site is contributed by 351–354; the sequence is EISS. Ser385 is an L-serine binding site.

It belongs to the class-II aminoacyl-tRNA synthetase family. Type-1 seryl-tRNA synthetase subfamily. Homodimer. The tRNA molecule binds across the dimer.

It localises to the cytoplasm. The catalysed reaction is tRNA(Ser) + L-serine + ATP = L-seryl-tRNA(Ser) + AMP + diphosphate + H(+). The enzyme catalyses tRNA(Sec) + L-serine + ATP = L-seryl-tRNA(Sec) + AMP + diphosphate + H(+). It functions in the pathway aminoacyl-tRNA biosynthesis; selenocysteinyl-tRNA(Sec) biosynthesis; L-seryl-tRNA(Sec) from L-serine and tRNA(Sec): step 1/1. In terms of biological role, catalyzes the attachment of serine to tRNA(Ser). Is also able to aminoacylate tRNA(Sec) with serine, to form the misacylated tRNA L-seryl-tRNA(Sec), which will be further converted into selenocysteinyl-tRNA(Sec). This is Serine--tRNA ligase from Brachyspira hyodysenteriae (strain ATCC 49526 / WA1).